We begin with the raw amino-acid sequence, 313 residues long: Antiviral protein I (313 aa).

The signal sequence occupies residues 1–22 (MKSMLVVTISIWLILAPTSTWA). Disulfide bonds link C56-C281 and C107-C128. Y94 is a catalytic residue. V95 contributes to the substrate binding site. Residue S143 coordinates substrate. Y145 is an active-site residue. S197 lines the substrate pocket. Residues E198 and R201 contribute to the active site. Residue R201 coordinates substrate. Positions 286-313 (NQNAMFPQLIMSTYYNYMVNLGDLFEGF) are excised as a propeptide.

Belongs to the ribosome-inactivating protein family. Type 1 RIP subfamily. Monomer. In terms of tissue distribution, expressed in spring leaves (at protein level). Expressed in roots (at protein level).

The enzyme catalyses Endohydrolysis of the N-glycosidic bond at one specific adenosine on the 28S rRNA.. Possesses antiviral potency. Inhibits viral infection of plants (tobacco mosaic virus). Inhibits protein synthesis. Releases both adenine and guanine from Escherichia coli rRNA in vitro. Activity on guanine is 20 times slower than that on adenine. The protein is Antiviral protein I (PAP1) of Phytolacca americana (American pokeweed).